The chain runs to 879 residues: MALIDLEDKIAEIVNREDHSDFLYELLGVYDVPRATITRLKKGNQNLTKRVGEVHLKNKVWFKEAKKGKLFDALIDIEQQVEYLSAKPRYLLVTDYDGVLAKDTKTLEALDVKFEELPQYFDFFLAWKGIEKVEFEKENPADIKAAERFARIYDVLRKENNIIETNRGLDLFLIRLLFCFFAEDTDIFKRNSFTNLIKTLTEEDGSNLNKLFADLFIVLDKNERDDVPSYLKEFPYVNGQLFTEPHTELEFSAKSRKLIIECGELLNWAKINPDIFGSMIQAVASEESRSYLGMHYTSVPNIMKVIKPLFLDKLNQSFLDAYDDYTKLENLLTRIGKIKFFDPACGSGNFLIITYKELRRMEINIIKRLQELLGEYLYVPSVTLSQFYGIEIEDFAHDVAKLSLWIAEHQMNEELKNEVHNAVRPTLPLHTAGDIRCANAIRVEWTEVCPAQGSEEVYVFGNPPYLGSKKQNKEHKSDMLSIFGKVKNGKMLDYISAWFYFGAKYASTTNAKVAFVSTNSVTQGEQVSILWNELFKFGIQINFAYKSFKWANNAKNNAAVIVVIVGFGPLDTKVNKYLFVDETKKLVSNISPYLTDGENILVSSRTKPISDLPKLHFGNMPNDGGGLLFTITEYTDAINKYPELVPYFKKFIGSVEFINGGLRYCLWLNEAKYEKIKSNPLIQERISISKNHREKSTDKGTNKLALTPWKFRDTHETTNYSIVVPSVSSENRFYIPMGLAGADTILSNLIYVIYDAEIYLLGILMSRMHMTWVKAVAGRLKTDYRYSAGLCYNTFPIPELSTRRKNEIEEAILEILDLREEQGGTLAELYNPSTMPIELKVAHEKLDGIVERAYRQKQFESDEERLEVLLKLYQEMTER.

Belongs to the methyltransferase superfamily.

The catalysed reaction is a 2'-deoxyadenosine in DNA + S-adenosyl-L-methionine = an N(6)-methyl-2'-deoxyadenosine in DNA + S-adenosyl-L-homocysteine + H(+). In terms of biological role, recognizes the double-stranded sequence 5'-GACGAG-3' and methylates A-5, yielding m6A. m6A methylation functions as a transcriptional modifier, promoting transcription of a number of genes (at least scpA, hbs, rnhC, yumC and zapA). One studied mechanism is via transcriptional repressor ScoC (also called hpr) which binds to non-methylated scpA promoter; when the m6A target is methylated ScoC no longer binds and scpA transcription is up-regulated. Other mechanisms for gene expression regulation probably exist. Binds DNA with and without the target sequence. Although it resembles a restriction-modification system, it does not have detectable endonuclease activity under tested conditions. A gamma subtype methylase. This is DNA methyltransferase A from Bacillus subtilis (strain 168).